The primary structure comprises 165 residues: NADH-ubiquinone oxidoreductase chain 6 (165 aa).

4 consecutive transmembrane segments (helical) span residues 1-21 (MVVYVTLIVMLFGSTLVFYSL), 47-67 (SFVPIVLFLVYIGGMLVVFPY), 83-103 (GEVVGLVFLFSSWVFMSFDNF), and 130-150 (GVLVILGVFVLLVALVGALII).

It belongs to the complex I subunit 6 family.

The protein resides in the mitochondrion membrane. The enzyme catalyses a ubiquinone + NADH + 5 H(+)(in) = a ubiquinol + NAD(+) + 4 H(+)(out). Core subunit of the mitochondrial membrane respiratory chain NADH dehydrogenase (Complex I) that is believed to belong to the minimal assembly required for catalysis. Complex I functions in the transfer of electrons from NADH to the respiratory chain. The immediate electron acceptor for the enzyme is believed to be ubiquinone. This chain is NADH-ubiquinone oxidoreductase chain 6 (ND6), found in Strongylocentrotus purpuratus (Purple sea urchin).